Consider the following 201-residue polypeptide: ATP-dependent Clp protease proteolytic subunit (201 aa).

Ser98 serves as the catalytic Nucleophile. The active site involves His123.

Belongs to the peptidase S14 family. In terms of assembly, fourteen ClpP subunits assemble into 2 heptameric rings which stack back to back to give a disk-like structure with a central cavity, resembling the structure of eukaryotic proteasomes.

The protein resides in the cytoplasm. It catalyses the reaction Hydrolysis of proteins to small peptides in the presence of ATP and magnesium. alpha-casein is the usual test substrate. In the absence of ATP, only oligopeptides shorter than five residues are hydrolyzed (such as succinyl-Leu-Tyr-|-NHMec, and Leu-Tyr-Leu-|-Tyr-Trp, in which cleavage of the -Tyr-|-Leu- and -Tyr-|-Trp bonds also occurs).. In terms of biological role, cleaves peptides in various proteins in a process that requires ATP hydrolysis. Has a chymotrypsin-like activity. Plays a major role in the degradation of misfolded proteins. The sequence is that of ATP-dependent Clp protease proteolytic subunit from Rickettsia canadensis (strain McKiel).